Here is a 118-residue protein sequence, read N- to C-terminus: Ribosomal silencing factor RsfS (118 aa).

Belongs to the Iojap/RsfS family. In terms of assembly, interacts with ribosomal protein uL14 (rplN).

Its subcellular location is the cytoplasm. Functionally, functions as a ribosomal silencing factor. Interacts with ribosomal protein uL14 (rplN), blocking formation of intersubunit bridge B8. Prevents association of the 30S and 50S ribosomal subunits and the formation of functional ribosomes, thus repressing translation. This Bacillus subtilis (strain 168) protein is Ribosomal silencing factor RsfS.